The chain runs to 151 residues: Small ribosomal subunit protein uS15 (151 aa).

It belongs to the universal ribosomal protein uS15 family.

The sequence is that of Small ribosomal subunit protein uS15 (RpS13) from Plutella xylostella (Diamondback moth).